The chain runs to 166 residues: Sec-independent protein translocase protein TatB (166 aa).

A helical membrane pass occupies residues 2–22 (FDGIGFMELLLIGVLGLVVLG). The tract at residues 69–166 (SKGLSNLSPE…DTRSNPKANG (98 aa)) is disordered. Composition is skewed to polar residues over residues 88-97 (QAAQSVNRPY) and 112-132 (QIYS…SQAN). Over residues 133–153 (PTATVEASPAPASPATPSEPS) the composition is skewed to low complexity. Over residues 155–166 (GADTRSNPKANG) the composition is skewed to polar residues.

Belongs to the TatB family. As to quaternary structure, the Tat system comprises two distinct complexes: a TatABC complex, containing multiple copies of TatA, TatB and TatC subunits, and a separate TatA complex, containing only TatA subunits. Substrates initially bind to the TatABC complex, which probably triggers association of the separate TatA complex to form the active translocon.

It localises to the cell inner membrane. Part of the twin-arginine translocation (Tat) system that transports large folded proteins containing a characteristic twin-arginine motif in their signal peptide across membranes. Together with TatC, TatB is part of a receptor directly interacting with Tat signal peptides. TatB may form an oligomeric binding site that transiently accommodates folded Tat precursor proteins before their translocation. This chain is Sec-independent protein translocase protein TatB, found in Shewanella baltica (strain OS155 / ATCC BAA-1091).